The chain runs to 122 residues: Large ribosomal subunit protein uL14 (122 aa).

This sequence belongs to the universal ribosomal protein uL14 family. In terms of assembly, part of the 50S ribosomal subunit. Forms a cluster with proteins L3 and L19. In the 70S ribosome, L14 and L19 interact and together make contacts with the 16S rRNA in bridges B5 and B8.

Functionally, binds to 23S rRNA. Forms part of two intersubunit bridges in the 70S ribosome. This is Large ribosomal subunit protein uL14 from Alkaliphilus oremlandii (strain OhILAs) (Clostridium oremlandii (strain OhILAs)).